The chain runs to 735 residues: Two pore calcium channel protein 1B (735 aa).

Residues 1-76 lie on the Cytoplasmic side of the membrane; it reads MEEYLLPGES…ELYFMFTRFD (76 aa). A helical transmembrane segment spans residues 77-97; sequence FLWSLNYLALVVLNFFEKPLW. Residues 98–125 are Extracellular-facing; sequence CSKHLAESCNNRDYYYLGELPFLTGAES. A helical transmembrane segment spans residues 126–146; it reads LIFEGVTLLLLIIHILFPISY. Over 147–161 the chain is Cytoplasmic; the sequence is EGFNLYWRSLLNRLK. The helical transmembrane segment at 162–182 threads the bilayer; it reads VILLLILVADIVVYILLPADF. Position 183 (Tyr183) is a topological domain, extracellular. The helical; Voltage-sensor transmembrane segment at 184–202 threads the bilayer; it reads YLPFRIAPYLRVVFFILNI. The Cytoplasmic segment spans residues 203 to 208; sequence RELRDS. Residues 209–229 form a helical membrane-spanning segment; sequence FFILAGMLGTYLNVVALSALF. The Extracellular portion of the chain corresponds to 230 to 248; the sequence is LLFSSWLAYVFFEDTRQGK. The segment at residues 249–263 is an intramembrane region (pore-forming); it reads TTFTSYGTTLYQMFV. The Extracellular segment spans residues 264-286; that stretch reads LFTTSNNPDVWIPAYKDSRWYCL. Residues 287–307 form a helical membrane-spanning segment; the sequence is FFVLYVLLGVYFVTNLILAVV. The Cytoplasmic portion of the chain corresponds to 308–431; it reads YDSFKSELVK…ASEKLRGFIR (124 aa). EF-hand domains follow at residues 325 to 360 and 366 to 401; these read LRLR…LNKY and ISGD…IGLR. A helical membrane pass occupies residues 432–452; the sequence is GATFEYIIVFVLLVNLVAVII. Residues 453-470 are Extracellular-facing; the sequence is ETTLDIQNNSGQTFWQKV. N-linked (GlcNAc...) asparagine glycosylation occurs at Asn460. Residues 471 to 491 form a helical membrane-spanning segment; sequence EFTFGWLYVIEMALKVYTYGF. The Cytoplasmic segment spans residues 492-501; that stretch reads ENYWRDGQNR. A helical transmembrane segment spans residues 502-522; sequence FDFIVTWVIVIGETTTFVAPD. Residues 523-531 are Extracellular-facing; it reads DLTFLSNGE. Residues 532–549 form a helical; Voltage-sensor membrane-spanning segment; the sequence is WIRYLLIARMLRLIRLLM. Over 550 to 560 the chain is Cytoplasmic; that stretch reads HVERYRAFVAT. The chain crosses the membrane as a helical span at residues 561-581; that stretch reads FLTLIPSLMPYLGTIFCILCF. Residues 582-618 are Extracellular-facing; it reads YCSLGLQIFGGIVNTGNPNLAQTDLAGNDYLLFNFND. The pore-forming intramembrane region spans 619–633; that stretch reads YPNGMVTLFNILVMG. At 634-654 the chain is on the extracellular side; the sequence is NWQVWMQSYKELTGTSWTYAY. A helical transmembrane segment spans residues 655-675; that stretch reads FVSFYLISVLWLLNLIVAFVL. Topologically, residues 676–735 are cytoplasmic; it reads EAFQAEMDLEASARCVDGDDKEAKRERRRNVGTKTRSQRVDFLLHHMLRSELTECSNDNP.

The protein belongs to the calcium channel alpha-1 subunit (TC 1.A.1.11) family. Two pore calcium channel subfamily. Homodimer.

The protein resides in the membrane. Inhibited by Al(3+), La(3+) and Gd(3+). Up-regulated by H(2)O(2), cryptogein, salicylic acid (SA) and cold shock. Functionally, functions as a voltage-gated inward-rectifying Ca(2+) channel (VDCC) across the plasma membrane that mediates sucrose-induced Ca(2+) influx in autotrophically grown leaf cells. Acts as the major ROS-responsive Ca(2+) channel and is the possible target of Al-dependent inhibition. Plays a regulatory role in defense responses. The protein is Two pore calcium channel protein 1B (TPC1B) of Nicotiana tabacum (Common tobacco).